A 456-amino-acid polypeptide reads, in one-letter code: RuvB-like helicase 1 (456 aa).

ATP is bound at residue 70 to 77 (GPPGTGKT).

This sequence belongs to the RuvB family. Forms homohexameric rings. May form a dodecamer with rept made of two stacked hexameric rings. Component of the chromatin remodeling Ino80 complex.

It localises to the nucleus. The catalysed reaction is ATP + H2O = ADP + phosphate + H(+). Acts as a transcriptional coactivator in Wg signaling. Its function is as follows. Proposed core component of the chromatin remodeling Ino80 complex which is involved in transcriptional regulation, DNA replication and probably DNA repair. The sequence is that of RuvB-like helicase 1 from Aedes aegypti (Yellowfever mosquito).